Reading from the N-terminus, the 331-residue chain is Probable leucine carboxyl methyltransferase 1 (331 aa).

S-adenosyl-L-methionine is bound by residues Arg82, Gly107, Asp131, 179 to 180, and Glu206; that span reads DL.

It belongs to the methyltransferase superfamily. LCMT family.

It catalyses the reaction [phosphatase 2A protein]-C-terminal L-leucine + S-adenosyl-L-methionine = [phosphatase 2A protein]-C-terminal L-leucine methyl ester + S-adenosyl-L-homocysteine. Its function is as follows. Methylates the carboxyl group of the C-terminal leucine residue of protein phosphatase 2A catalytic subunits to form alpha-leucine ester residues. The chain is Probable leucine carboxyl methyltransferase 1 from Caenorhabditis briggsae.